The following is a 102-amino-acid chain: Small ribosomal subunit protein uS10 (102 aa).

It belongs to the universal ribosomal protein uS10 family. Part of the 30S ribosomal subunit.

Its function is as follows. Involved in the binding of tRNA to the ribosomes. The protein is Small ribosomal subunit protein uS10 of Gluconacetobacter diazotrophicus (strain ATCC 49037 / DSM 5601 / CCUG 37298 / CIP 103539 / LMG 7603 / PAl5).